A 192-amino-acid polypeptide reads, in one-letter code: 7-methyl-GTP pyrophosphatase (192 aa).

Asp-69 serves as the catalytic Proton acceptor.

This sequence belongs to the Maf family. YceF subfamily. Requires a divalent metal cation as cofactor.

The protein localises to the cytoplasm. It catalyses the reaction N(7)-methyl-GTP + H2O = N(7)-methyl-GMP + diphosphate + H(+). Functionally, nucleoside triphosphate pyrophosphatase that hydrolyzes 7-methyl-GTP (m(7)GTP). May have a dual role in cell division arrest and in preventing the incorporation of modified nucleotides into cellular nucleic acids. This is 7-methyl-GTP pyrophosphatase from Pseudomonas syringae pv. syringae (strain B728a).